Reading from the N-terminus, the 118-residue chain is Ribosome-binding factor A (118 aa).

Belongs to the RbfA family. As to quaternary structure, monomer. Binds 30S ribosomal subunits, but not 50S ribosomal subunits or 70S ribosomes.

It is found in the cytoplasm. One of several proteins that assist in the late maturation steps of the functional core of the 30S ribosomal subunit. Associates with free 30S ribosomal subunits (but not with 30S subunits that are part of 70S ribosomes or polysomes). Required for efficient processing of 16S rRNA. May interact with the 5'-terminal helix region of 16S rRNA. This chain is Ribosome-binding factor A, found in Bacillus cereus (strain AH820).